The chain runs to 430 residues: UDP-N-acetylglucosamine 1-carboxyvinyltransferase (430 aa).

22-23 (KN) is a phosphoenolpyruvate binding site. R102 serves as a coordination point for UDP-N-acetyl-alpha-D-glucosamine. C126 serves as the catalytic Proton donor. 2-(S-cysteinyl)pyruvic acid O-phosphothioketal is present on C126. UDP-N-acetyl-alpha-D-glucosamine contacts are provided by residues 131–135 (RPVDL), 172–175 (KVSV), D317, and I339.

This sequence belongs to the EPSP synthase family. MurA subfamily.

The protein resides in the cytoplasm. The enzyme catalyses phosphoenolpyruvate + UDP-N-acetyl-alpha-D-glucosamine = UDP-N-acetyl-3-O-(1-carboxyvinyl)-alpha-D-glucosamine + phosphate. It functions in the pathway cell wall biogenesis; peptidoglycan biosynthesis. Cell wall formation. Adds enolpyruvyl to UDP-N-acetylglucosamine. The sequence is that of UDP-N-acetylglucosamine 1-carboxyvinyltransferase from Rhizobium etli (strain CIAT 652).